The sequence spans 456 residues: UDP-N-acetylmuramate--L-alanine ligase (456 aa).

112–118 (GTHGKTT) is an ATP binding site.

This sequence belongs to the MurCDEF family.

The protein resides in the cytoplasm. It catalyses the reaction UDP-N-acetyl-alpha-D-muramate + L-alanine + ATP = UDP-N-acetyl-alpha-D-muramoyl-L-alanine + ADP + phosphate + H(+). It participates in cell wall biogenesis; peptidoglycan biosynthesis. Cell wall formation. The protein is UDP-N-acetylmuramate--L-alanine ligase of Trichlorobacter lovleyi (strain ATCC BAA-1151 / DSM 17278 / SZ) (Geobacter lovleyi).